The primary structure comprises 119 residues: NADH dehydrogenase [ubiquinone] 1 subunit C2 (119 aa).

Residues 56–75 form a helical membrane-spanning segment; it reads GLHRQLLYITAFFFAGYYLV.

It belongs to the complex I NDUFC2 subunit family. Complex I is composed of 45 different subunits. Interacts with TMEM242.

Its subcellular location is the mitochondrion inner membrane. Its function is as follows. Accessory subunit of the mitochondrial membrane respiratory chain NADH dehydrogenase (Complex I), that is believed not to be involved in catalysis but required for the complex assembly. Complex I functions in the transfer of electrons from NADH to the respiratory chain. The immediate electron acceptor for the enzyme is believed to be ubiquinone. In Pongo pygmaeus (Bornean orangutan), this protein is NADH dehydrogenase [ubiquinone] 1 subunit C2.